A 169-amino-acid polypeptide reads, in one-letter code: NAD(P)H-quinone oxidoreductase subunit J, chloroplastic (169 aa).

It belongs to the complex I 30 kDa subunit family. As to quaternary structure, NDH is composed of at least 16 different subunits, 5 of which are encoded in the nucleus.

It is found in the plastid. It localises to the chloroplast thylakoid membrane. It carries out the reaction a plastoquinone + NADH + (n+1) H(+)(in) = a plastoquinol + NAD(+) + n H(+)(out). It catalyses the reaction a plastoquinone + NADPH + (n+1) H(+)(in) = a plastoquinol + NADP(+) + n H(+)(out). Functionally, NDH shuttles electrons from NAD(P)H:plastoquinone, via FMN and iron-sulfur (Fe-S) centers, to quinones in the photosynthetic chain and possibly in a chloroplast respiratory chain. The immediate electron acceptor for the enzyme in this species is believed to be plastoquinone. Couples the redox reaction to proton translocation, and thus conserves the redox energy in a proton gradient. The chain is NAD(P)H-quinone oxidoreductase subunit J, chloroplastic from Physcomitrium patens (Spreading-leaved earth moss).